We begin with the raw amino-acid sequence, 434 residues long: D-inositol 3-phosphate glycosyltransferase (434 aa).

Histidine 26 is a 1D-myo-inositol 3-phosphate binding site. UDP-N-acetyl-alpha-D-glucosamine is bound by residues 32–33 and glycine 40; that span reads QP. 1D-myo-inositol 3-phosphate is bound by residues 37–42, lysine 95, tyrosine 128, threonine 152, and arginine 172; that span reads DAGGMN. UDP-N-acetyl-alpha-D-glucosamine is bound by residues arginine 246 and lysine 251. The Mg(2+) site is built by tyrosine 321, arginine 322, and alanine 324. UDP-N-acetyl-alpha-D-glucosamine is bound by residues glutamate 334 and glutamate 342. Position 348 (threonine 348) interacts with Mg(2+).

Belongs to the glycosyltransferase group 1 family. MshA subfamily. In terms of assembly, homodimer.

The enzyme catalyses 1D-myo-inositol 3-phosphate + UDP-N-acetyl-alpha-D-glucosamine = 1D-myo-inositol 2-acetamido-2-deoxy-alpha-D-glucopyranoside 3-phosphate + UDP + H(+). In terms of biological role, catalyzes the transfer of a N-acetyl-glucosamine moiety to 1D-myo-inositol 3-phosphate to produce 1D-myo-inositol 2-acetamido-2-deoxy-glucopyranoside 3-phosphate in the mycothiol biosynthesis pathway. This is D-inositol 3-phosphate glycosyltransferase from Thermobifida fusca (strain YX).